Reading from the N-terminus, the 478-residue chain is Trigger factor (478 aa).

Over residues 154–167 the composition is skewed to basic and acidic residues; sequence MAKDSRSFEPREEG. Disordered regions lie at residues 154-173 and 444-478; these read MAKD…AQSG and LFAE…KAAG. The 86-residue stretch at 173 to 258 folds into the PPIase FKBP-type domain; sequence GDRVTIDFVG…VKAVAAPGET (86 aa).

The protein belongs to the FKBP-type PPIase family. Tig subfamily.

Its subcellular location is the cytoplasm. It carries out the reaction [protein]-peptidylproline (omega=180) = [protein]-peptidylproline (omega=0). Functionally, involved in protein export. Acts as a chaperone by maintaining the newly synthesized protein in an open conformation. Functions as a peptidyl-prolyl cis-trans isomerase. This chain is Trigger factor, found in Methylorubrum populi (strain ATCC BAA-705 / NCIMB 13946 / BJ001) (Methylobacterium populi).